A 226-amino-acid chain; its full sequence is Ornithine decarboxylase antizyme (226 aa).

It belongs to the ODC antizyme family. In terms of assembly, interacts with ODC and thereby sterically blocks ODC homodimerization.

Ornithine decarboxylase (ODC) antizyme protein that negatively regulates ODC activity and intracellular polyamine biosynthesis in response to increased intracellular polyamine levels. Binds to ODC monomers, inhibiting the assembly of the functional ODC homodimer, and targets the monomers for ubiquitin-independent proteolytic destruction by the 26S proteasome. This chain is Ornithine decarboxylase antizyme (spa1), found in Schizosaccharomyces japonicus (Fission yeast).